The following is a 392-amino-acid chain: MNKILAANQTLTSEAVSEGHPDKIADQISDAILDEILKVDKNAKVACEVIITQNLVVIAGEINSPVKKTLDIKEIAKKIIKDIGYTNIDYGLDYKTITVIDAIGNQSQDIINAIKKKGSNALGAGDQGIIFGYACDETKNFLPAPYELANSILKKASNLRKSGAIEWLRPDSKSQVTIEYDKNRRPVKIKNIIVSHQHHPNISQKLIREPIIEEIIKPTIQDKSIIDENTTYCINPSGNFVIGGPTGDTGLTGRKIIADSYGGFARHGGGAYSGKDATKVDRSAAYMARYIAKNMVAAGISKEFELQLAYAIGIENPISIQITSGINDPKYANKILNFIVNNFDLTPNGIIEKLKLKQPIYLKTCTYGQLGKNEFEWEKLDFVKKIQTVLKK.

Residue His20 coordinates ATP. Position 22 (Asp22) interacts with Mg(2+). Glu48 is a K(+) binding site. L-methionine is bound by residues Glu61 and Gln106. The segment at 106 to 116 is flexible loop; it reads QSQDIINAIKK. Residues 171 to 173, Asp248, 254 to 255, Ala271, and Lys275 contribute to the ATP site; these read DSK and RK. Asp248 is a binding site for L-methionine. Residue Lys279 coordinates L-methionine.

Belongs to the AdoMet synthase family. As to quaternary structure, homotetramer; dimer of dimers. The cofactor is Mg(2+). Requires K(+) as cofactor.

The protein localises to the cytoplasm. It catalyses the reaction L-methionine + ATP + H2O = S-adenosyl-L-methionine + phosphate + diphosphate. It participates in amino-acid biosynthesis; S-adenosyl-L-methionine biosynthesis; S-adenosyl-L-methionine from L-methionine: step 1/1. Its function is as follows. Catalyzes the formation of S-adenosylmethionine (AdoMet) from methionine and ATP. The overall synthetic reaction is composed of two sequential steps, AdoMet formation and the subsequent tripolyphosphate hydrolysis which occurs prior to release of AdoMet from the enzyme. The polypeptide is S-adenosylmethionine synthase (Borrelia garinii subsp. bavariensis (strain ATCC BAA-2496 / DSM 23469 / PBi) (Borreliella bavariensis)).